A 348-amino-acid polypeptide reads, in one-letter code: Heptaprenyl diphosphate synthase component 2 (348 aa).

Isopentenyl diphosphate contacts are provided by lysine 73, arginine 76, and histidine 105. Residues aspartate 112 and aspartate 116 each coordinate Mg(2+). Residue arginine 121 coordinates all-trans-hexaprenyl diphosphate. Arginine 122 contributes to the isopentenyl diphosphate binding site. Lysine 198, threonine 199, and glutamine 236 together coordinate all-trans-hexaprenyl diphosphate.

Belongs to the FPP/GGPP synthase family. Heterodimer of component I and II. Mg(2+) is required as a cofactor.

It catalyses the reaction 4 isopentenyl diphosphate + (2E,6E)-farnesyl diphosphate = all-trans-heptaprenyl diphosphate + 4 diphosphate. Its function is as follows. Supplies heptaprenyl diphosphate, the precursor for the side chain of the isoprenoid quinone menaquinone-7 (MQ-7). This Bacillus subtilis (strain 168) protein is Heptaprenyl diphosphate synthase component 2 (hepT).